Reading from the N-terminus, the 265-residue chain is Cyclin-B2-5 (265 aa).

The protein belongs to the cyclin family. Cyclin AB subfamily.

This is Cyclin-B2-5 (CYCB2-5) from Arabidopsis thaliana (Mouse-ear cress).